The chain runs to 172 residues: Small ribosomal subunit protein uS5 (172 aa).

In terms of domain architecture, S5 DRBM spans 16–79 (LKDRLVAINR…ESAKKNLVKV (64 aa)).

This sequence belongs to the universal ribosomal protein uS5 family. Part of the 30S ribosomal subunit. Contacts proteins S4 and S8.

Functionally, with S4 and S12 plays an important role in translational accuracy. Located at the back of the 30S subunit body where it stabilizes the conformation of the head with respect to the body. The sequence is that of Small ribosomal subunit protein uS5 from Bacteroides thetaiotaomicron (strain ATCC 29148 / DSM 2079 / JCM 5827 / CCUG 10774 / NCTC 10582 / VPI-5482 / E50).